Here is a 100-residue protein sequence, read N- to C-terminus: Urease subunit gamma (100 aa).

It belongs to the urease gamma subunit family. In terms of assembly, heterotrimer of UreA (gamma), UreB (beta) and UreC (alpha) subunits. Three heterotrimers associate to form the active enzyme.

The protein resides in the cytoplasm. It catalyses the reaction urea + 2 H2O + H(+) = hydrogencarbonate + 2 NH4(+). Its pathway is nitrogen metabolism; urea degradation; CO(2) and NH(3) from urea (urease route): step 1/1. This Pseudarthrobacter chlorophenolicus (strain ATCC 700700 / DSM 12829 / CIP 107037 / JCM 12360 / KCTC 9906 / NCIMB 13794 / A6) (Arthrobacter chlorophenolicus) protein is Urease subunit gamma.